The primary structure comprises 289 residues: Energy-coupling factor transporter ATP-binding protein EcfA2 (289 aa).

The region spanning 3–246 is the ABC transporter domain; the sequence is IEIKDVEHRY…KDDIAALGLD (244 aa). An ATP-binding site is contributed by 40 to 47; sequence GHTGSGKS.

This sequence belongs to the ABC transporter superfamily. Energy-coupling factor EcfA family. Forms a stable energy-coupling factor (ECF) transporter complex composed of 2 membrane-embedded substrate-binding proteins (S component), 2 ATP-binding proteins (A component) and 2 transmembrane proteins (T component).

The protein localises to the cell membrane. ATP-binding (A) component of a common energy-coupling factor (ECF) ABC-transporter complex. Unlike classic ABC transporters this ECF transporter provides the energy necessary to transport a number of different substrates. This Bacillus licheniformis (strain ATCC 14580 / DSM 13 / JCM 2505 / CCUG 7422 / NBRC 12200 / NCIMB 9375 / NCTC 10341 / NRRL NRS-1264 / Gibson 46) protein is Energy-coupling factor transporter ATP-binding protein EcfA2.